A 188-amino-acid chain; its full sequence is MSRLRIFADSNPTTPHFDSRDGEQIATELRKIGVTFERWHASQPVEPGASPEQVMAAYRADIDRISAERGFKTVDVVSIAPDNPKREEMRAKFLDEHFHKEDEVRFFVAGSGLFTLHVDAQVYEIECVKDDLIAVPDSTLHWFDMGPEPHFVAIRFFTEPDGWVGHFTGTEIAKQFPRYAPEKPPKAS.

Residues Met1–Arg20 form a disordered region. 4 residues coordinate Fe(2+): His97, His99, Glu103, and His141. Ni(2+) is bound by residues His97, His99, Glu103, and His141.

The protein belongs to the acireductone dioxygenase (ARD) family. As to quaternary structure, monomer. The cofactor is Fe(2+). Requires Ni(2+) as cofactor.

The enzyme catalyses 1,2-dihydroxy-5-(methylsulfanyl)pent-1-en-3-one + O2 = 3-(methylsulfanyl)propanoate + CO + formate + 2 H(+). It catalyses the reaction 1,2-dihydroxy-5-(methylsulfanyl)pent-1-en-3-one + O2 = 4-methylsulfanyl-2-oxobutanoate + formate + 2 H(+). It participates in amino-acid biosynthesis; L-methionine biosynthesis via salvage pathway; L-methionine from S-methyl-5-thio-alpha-D-ribose 1-phosphate: step 5/6. In terms of biological role, catalyzes 2 different reactions between oxygen and the acireductone 1,2-dihydroxy-3-keto-5-methylthiopentene (DHK-MTPene) depending upon the metal bound in the active site. Fe-containing acireductone dioxygenase (Fe-ARD) produces formate and 2-keto-4-methylthiobutyrate (KMTB), the alpha-ketoacid precursor of methionine in the methionine recycle pathway. Ni-containing acireductone dioxygenase (Ni-ARD) produces methylthiopropionate, carbon monoxide and formate, and does not lie on the methionine recycle pathway. This Xanthomonas campestris pv. campestris (strain 8004) protein is Acireductone dioxygenase.